The chain runs to 449 residues: uncharacterized protein (449 aa).

Transmembrane regions (helical) follow at residues 1-21 (MVAN…ILLI), 26-46 (IHLT…HVIT), 51-71 (IDYI…MVLV), 97-117 (LLML…PNAT), 137-157 (FVPI…LTLV), 178-198 (FKLS…TPFL), 223-243 (VLMA…IGES), 244-264 (LPVP…ALLL), 285-305 (LIFF…GVTA), 310-330 (LLAV…VFTV), 340-360 (IPLV…IGFA), 377-397 (VLPL…GTLV), and 425-445 (GLPV…WLMF).

This sequence belongs to the CitM (TC 2.A.11) transporter family.

It is found in the cell membrane. This is an uncharacterized protein from Synechocystis sp. (strain ATCC 27184 / PCC 6803 / Kazusa).